Here is a 132-residue protein sequence, read N- to C-terminus: Phosphoribosyl-AMP cyclohydrolase (132 aa).

Mg(2+) is bound at residue Asp78. Cys79 is a Zn(2+) binding site. The Mg(2+) site is built by Asp80 and Asp82. Zn(2+) contacts are provided by Cys96 and Cys103.

Belongs to the PRA-CH family. As to quaternary structure, homodimer. Mg(2+) serves as cofactor. Zn(2+) is required as a cofactor.

The protein resides in the cytoplasm. The enzyme catalyses 1-(5-phospho-beta-D-ribosyl)-5'-AMP + H2O = 1-(5-phospho-beta-D-ribosyl)-5-[(5-phospho-beta-D-ribosylamino)methylideneamino]imidazole-4-carboxamide. It functions in the pathway amino-acid biosynthesis; L-histidine biosynthesis; L-histidine from 5-phospho-alpha-D-ribose 1-diphosphate: step 3/9. In terms of biological role, catalyzes the hydrolysis of the adenine ring of phosphoribosyl-AMP. The chain is Phosphoribosyl-AMP cyclohydrolase from Nitrosococcus oceani (strain ATCC 19707 / BCRC 17464 / JCM 30415 / NCIMB 11848 / C-107).